The following is a 577-amino-acid chain: uncharacterized protein (577 aa).

Polar residues-rich tracts occupy residues 1 to 21 (MSST…QSAS) and 68 to 87 (SFQN…SKTE). 2 disordered regions span residues 1-24 (MSST…SAHP) and 68-93 (SFQN…PDDV). 12 consecutive transmembrane segments (helical) span residues 139 to 159 (CILA…AVPA), 174 to 194 (LLTM…WAPL), 204 to 224 (ILIG…GKDI), 232 to 252 (FFAG…LADM), 262 to 282 (ITLF…VGGF), 292 to 312 (WTEY…YLFC), 367 to 387 (PICF…YLLL), 402 to 422 (MGVA…GSGI), 447 to 467 (LPPM…LSWS), 473 to 493 (VNWV…LLIF), 504 to 526 (YLFR…AAGF), and 543 to 563 (GSLL…FFFF).

The protein belongs to the major facilitator superfamily. CAR1 family.

Its subcellular location is the endoplasmic reticulum. The protein resides in the membrane. This is an uncharacterized protein from Schizosaccharomyces pombe (strain 972 / ATCC 24843) (Fission yeast).